Consider the following 246-residue polypeptide: MKLIIGVITLFPQMFDALKSGVIGRALKQDRLTLSCWNPRDYATDPHRTVDDRPYGGGPGMVMKFEPLALALKAAKAQLGENTKVIHLTPQGKLLTQAIVREKIHASPLILLAGRYEGIDERLIEAEVDEEWSIGDYILSGGELPAMVLIDAMTRLLPGVLGHKDSASQDSFTAGLLDYPHYTRPEKIADRPVPSVLLSGDHEAISRWRLKQSLGRTWQRRQDLIKRRSLSENEQRLLDEFFEESS.

Residues Gly114 and 134–139 (IGDYIL) contribute to the S-adenosyl-L-methionine site.

The protein belongs to the RNA methyltransferase TrmD family. As to quaternary structure, homodimer.

The protein resides in the cytoplasm. It catalyses the reaction guanosine(37) in tRNA + S-adenosyl-L-methionine = N(1)-methylguanosine(37) in tRNA + S-adenosyl-L-homocysteine + H(+). Specifically methylates guanosine-37 in various tRNAs. This is tRNA (guanine-N(1)-)-methyltransferase from Coxiella burnetii (strain RSA 493 / Nine Mile phase I).